The chain runs to 861 residues: Protein argonaute-4 (861 aa).

Residues 219–338 enclose the PAZ domain; the sequence is PIIEFMCEVL…LPLEVCNIVA (120 aa). Residues 509–820 form the Piwi domain; that stretch reads LIVVILPGKT…VAFRARYHLV (312 aa). A disordered region spans residues 825–846; it reads DSAEGSHVSGQSNGRDPQALAK.

This sequence belongs to the argonaute family. Ago subfamily. In terms of assembly, interacts with EIF4B, IMP8, PRMT5, TNRC6A and TNRC6B. Interacts with ZFP36. In terms of processing, ubiquitinated on surface-exposed lysines by a SCF-like E3 ubiquitin-protein ligase complex containing ZSWIM8 during target-directed microRNA degradation (TDMD), a process that mediates degradation of microRNAs (miRNAs). Ubiquitination by the SCF-like E3 ubiquitin-protein ligase complex containing ZSWIM8 leads to its subsequent degradation, thereby exposing miRNAs for degradation. ZSWIM8 recognizes and binds AGO4 when it is engaged with a TDMD target.

Its subcellular location is the cytoplasm. The protein resides in the P-body. Functionally, required for RNA-mediated gene silencing (RNAi). Binds to short RNAs such as microRNAs (miRNAs) and represses the translation of mRNAs which are complementary to them. Lacks endonuclease activity and does not appear to cleave target mRNAs. Also required for RNA-directed transcription and replication of the human hapatitis delta virus (HDV). This Homo sapiens (Human) protein is Protein argonaute-4 (AGO4).